Reading from the N-terminus, the 404-residue chain is Chorismate synthase (404 aa).

NADP(+)-binding residues include R40 and R46. FMN-binding positions include 135 to 137 (RAS), 256 to 257 (QA), G300, 315 to 319 (KPIST), and R341.

Belongs to the chorismate synthase family. As to quaternary structure, homotetramer. It depends on FMNH2 as a cofactor.

The catalysed reaction is 5-O-(1-carboxyvinyl)-3-phosphoshikimate = chorismate + phosphate. It participates in metabolic intermediate biosynthesis; chorismate biosynthesis; chorismate from D-erythrose 4-phosphate and phosphoenolpyruvate: step 7/7. Functionally, catalyzes the anti-1,4-elimination of the C-3 phosphate and the C-6 proR hydrogen from 5-enolpyruvylshikimate-3-phosphate (EPSP) to yield chorismate, which is the branch point compound that serves as the starting substrate for the three terminal pathways of aromatic amino acid biosynthesis. This reaction introduces a second double bond into the aromatic ring system. The chain is Chorismate synthase from Mycobacterium sp. (strain JLS).